The chain runs to 220 residues: Peptide methionine sulfoxide reductase MsrA (220 aa).

Residue cysteine 54 is part of the active site.

The protein belongs to the MsrA Met sulfoxide reductase family.

It carries out the reaction L-methionyl-[protein] + [thioredoxin]-disulfide + H2O = L-methionyl-(S)-S-oxide-[protein] + [thioredoxin]-dithiol. It catalyses the reaction [thioredoxin]-disulfide + L-methionine + H2O = L-methionine (S)-S-oxide + [thioredoxin]-dithiol. In terms of biological role, has an important function as a repair enzyme for proteins that have been inactivated by oxidation. Catalyzes the reversible oxidation-reduction of methionine sulfoxide in proteins to methionine. This chain is Peptide methionine sulfoxide reductase MsrA, found in Salinispora tropica (strain ATCC BAA-916 / DSM 44818 / JCM 13857 / NBRC 105044 / CNB-440).